We begin with the raw amino-acid sequence, 325 residues long: Chain length determinant protein (325 aa).

Over 1 to 31 the chain is Cytoplasmic; the sequence is MRVENNNVSGQNHDPEQIDLIDLLVQLWRGK. Residues 32-52 form a helical membrane-spanning segment; that stretch reads MTIIISVIVAIALAIGYLAVA. Topologically, residues 53-294 are periplasmic; the sequence is KEKWTSTAII…LPIRRDSPKK (242 aa). The chain crosses the membrane as a helical span at residues 295–315; it reads AITLILAVLLGGMVGAGIVLG. The Cytoplasmic segment spans residues 316–325; it reads RNALRNYNAK.

Belongs to the WzzB/Cld/Rol family.

It localises to the cell inner membrane. It participates in bacterial outer membrane biogenesis; lipopolysaccharide biosynthesis. Its function is as follows. Confers a modal distribution of chain length on the O-antigen component of lipopolysaccharide (LPS). Gives rise to a reduced number of short chain molecules and increases in numbers of longer molecules. The sequence is that of Chain length determinant protein (wzzB) from Shigella flexneri.